Reading from the N-terminus, the 145-residue chain is Probable disulfide formation protein (145 aa).

The chain crosses the membrane as a helical span at residues 9–28 (ENLLLLIWVQAFLALAGSLF). A disulfide bridge connects residues Cys38 and Cys41. 2 consecutive transmembrane segments (helical) span residues 43–62 (YQRILMYPLVLIYGVAAIKK) and 69–86 (PGLFMSGIGLLVSTYHYL). Cys100 and Cys106 form a disulfide bridge. The chain crosses the membrane as a helical span at residues 115 to 137 (GFISIPFMAGVAFLIIFVLHLLI).

This sequence belongs to the DsbB family. BdbC subfamily.

It is found in the cell membrane. In terms of biological role, required for disulfide bond formation in some proteins. In Oceanobacillus iheyensis (strain DSM 14371 / CIP 107618 / JCM 11309 / KCTC 3954 / HTE831), this protein is Probable disulfide formation protein.